Here is a 204-residue protein sequence, read N- to C-terminus: Mediator of RNA polymerase II transcription subunit 31 (204 aa).

A disordered region spans residues 134 to 204 (QQQQQQANGM…SGANIKLELN (71 aa)). A compositionally biased stretch (low complexity) spans 161 to 194 (SASTADSQQTSSALQPVQAQPGNPQQQQQINGVA).

It belongs to the Mediator complex subunit 31 family. In terms of assembly, component of the Mediator complex, which includes at least MED4, MED6, MED14, MED17, MED18, MED20, MED21, MED23, MED24, MED27, MED30 and MED31.

It is found in the nucleus. In terms of biological role, component of the Mediator complex, a coactivator involved in the regulated transcription of nearly all RNA polymerase II-dependent genes. Mediator functions as a bridge to convey information from gene-specific regulatory proteins to the basal RNA polymerase II transcription machinery. Mediator is recruited to promoters by direct interactions with regulatory proteins and serves as a scaffold for the assembly of a functional preinitiation complex with RNA polymerase II and the general transcription factors. Required for activated transcription of the MtnA gene. The protein is Mediator of RNA polymerase II transcription subunit 31 (MED31) of Drosophila melanogaster (Fruit fly).